The following is a 157-amino-acid chain: Cyclic pyranopterin monophosphate synthase (157 aa).

Substrate-binding positions include 74–76 (MCH) and 112–113 (ME). D127 is a catalytic residue.

It belongs to the MoaC family. As to quaternary structure, homohexamer; trimer of dimers.

The enzyme catalyses (8S)-3',8-cyclo-7,8-dihydroguanosine 5'-triphosphate = cyclic pyranopterin phosphate + diphosphate. The protein operates within cofactor biosynthesis; molybdopterin biosynthesis. In terms of biological role, catalyzes the conversion of (8S)-3',8-cyclo-7,8-dihydroguanosine 5'-triphosphate to cyclic pyranopterin monophosphate (cPMP). The polypeptide is Cyclic pyranopterin monophosphate synthase (Campylobacter jejuni subsp. doylei (strain ATCC BAA-1458 / RM4099 / 269.97)).